Reading from the N-terminus, the 237-residue chain is CD63 antigen (237 aa).

Residues 1 to 11 (MAVEGGMKCVK) lie on the Cytoplasmic side of the membrane. A helical membrane pass occupies residues 12–32 (FLLYVLLLVFCACAVGLIAVG). At 33-51 (VGTHLVLNQTITHGATPSF) the chain is on the extracellular side. An N-linked (GlcNAc...) asparagine glycan is attached at Asn40. Residues 52 to 72 (LLPVVIIAVGAFLFLVAFVGC) traverse the membrane as a helical segment. Over 73–81 (CGACKENYC) the chain is Cytoplasmic. A helical transmembrane segment spans residues 82 to 102 (LMITFAIFLSLIMLVEVAAAI). At 103 to 202 (AGYVFRDKVR…KIAAWLRKNV (100 aa)) the chain is on the extracellular side. N-linked (GlcNAc...) asparagine glycans are attached at residues Asn130, Asn150, and Asn171. Residues 203–223 (LVVAAAALGIAFVEILGIVLA) traverse the membrane as a helical segment. Over 224–237 (CCLVKSIRSGYEVM) the chain is Cytoplasmic. The Lysosomal targeting motif motif lies at 233-237 (GYEVM).

This sequence belongs to the tetraspanin (TM4SF) family. In terms of assembly, interacts with TIMP1 and ITGB1 and recruits TIMP1 to ITGB1. Interacts with CD9. Identified in a complex with CD9 and ITGB3. Interacts with PMEL. Interacts with KDR/VEGFR2; identified in a complex with ITGB1 and KDR/VEGFR2 and is required to recruit KDR to ITGB1 complexes. Interacts with SYT7. In terms of processing, palmitoylated at a low, basal level in unstimulated platelets. The level of palmitoylation increases when platelets are activated by thrombin (in vitro).

It localises to the cell membrane. The protein localises to the lysosome membrane. It is found in the late endosome membrane. The protein resides in the endosome. Its subcellular location is the multivesicular body. It localises to the melanosome. The protein localises to the secreted. It is found in the extracellular exosome. The protein resides in the cell surface. Its function is as follows. Functions as a cell surface receptor for TIMP1 and plays a role in the activation of cellular signaling cascades. Plays a role in the activation of ITGB1 and integrin signaling, leading to the activation of AKT, FAK/PTK2 and MAP kinases. Promotes cell survival, reorganization of the actin cytoskeleton, cell adhesion, spreading and migration, via its role in the activation of AKT and FAK/PTK2. Plays a role in VEGFA signaling via its role in regulating the internalization of KDR/VEGFR2. Plays a role in intracellular vesicular transport processes, and is required for normal trafficking of the PMEL luminal domain that is essential for the development and maturation of melanocytes. Plays a role in the adhesion of leukocytes onto endothelial cells via its role in the regulation of SELP trafficking. May play a role in mast cell degranulation in response to Ms4a2/FceRI stimulation, but not in mast cell degranulation in response to other stimuli. In Bos taurus (Bovine), this protein is CD63 antigen (CD63).